A 363-amino-acid polypeptide reads, in one-letter code: Probable butyrate kinase (363 aa).

This sequence belongs to the acetokinase family.

Its subcellular location is the cytoplasm. It carries out the reaction butanoate + ATP = butanoyl phosphate + ADP. In Maridesulfovibrio salexigens (strain ATCC 14822 / DSM 2638 / NCIMB 8403 / VKM B-1763) (Desulfovibrio salexigens), this protein is Probable butyrate kinase.